Here is a 676-residue protein sequence, read N- to C-terminus: Envelope glycoprotein (676 aa).

The signal sequence occupies residues 1-32 (MGGLSLLQLPRDKFRKSSFFVWVIILFQKAFS). The interval 33–185 (MPLGVVTNST…FAEGVIAFLI (153 aa)) is receptor binding. The Extracellular segment spans residues 33-650 (MPLGVVTNST…DDNWWTGWRQ (618 aa)). Asparagine 40 carries an N-linked (GlcNAc...) asparagine; by host glycan. Disulfide bonds link cysteine 53/cysteine 609, cysteine 108/cysteine 135, cysteine 121/cysteine 147, cysteine 511/cysteine 556, and cysteine 601/cysteine 608. 8 N-linked (GlcNAc...) asparagine; by host glycosylation sites follow: asparagine 204, asparagine 208, asparagine 238, asparagine 257, asparagine 268, asparagine 296, asparagine 314, and asparagine 366. Positions 305-485 (ELSFEALSLN…STSNGLITST (181 aa)) are mucin-like region. Disordered regions lie at residues 337–373 (RKYS…GRRV) and 404–461 (RPSS…LTTP). 2 stretches are compositionally biased toward low complexity: residues 405–428 (PSSS…TPTT) and 449–461 (PGPT…LTTP). A glycan (N-linked (GlcNAc...) asparagine; by host) is linked at asparagine 463. The segment at 524–539 (HNAAGIAWIPYFGPGA) is fusion peptide. The stretch at 554–595 (LVCGLRQLANETTQALQLFLRATTELRTYTILNRKAIDFLLR) forms a coiled coil. N-linked (GlcNAc...) asparagine; by host glycosylation is present at asparagine 563. The stretch at 615–634 (WTKNITDKINQIIHDFIDNP) forms a coiled coil. An N-linked (GlcNAc...) asparagine; by host glycan is attached at asparagine 618. The helical transmembrane segment at 651–671 (WIPAGIGITGIIIAIIALLCV) threads the bilayer. S-palmitoyl cysteine; by host attachment occurs at residues cysteine 670 and cysteine 672. Topologically, residues 672–676 (CKLLC) are cytoplasmic.

Belongs to the filoviruses glycoprotein family. As to quaternary structure, homotrimer; each monomer consists of a GP1 and a GP2 subunit linked by disulfide bonds. The resulting peplomers (GP1,2) protrude from the virus surface as spikes. Interacts with host integrin alpha-V/ITGAV. Interacts with host CLEC10A. Binds also to host CD209 and CLEC4M/DC-SIGN(R). Interacts with host FOLR1. Interacts with BST2; this interaction inhibits the antiviral effect of BST2 and this allows viral release from infected cells. Interacts with host FCN1; this interaction enhances viral entry. Interacts with host TLR4; this interaction induces cell death in T-lymphocytes or proinflammatory cytokines and SOCS1 production in monocytes. Interacts with host entry receptor NPC1. In terms of assembly, GP1 and GP2delta are part of GP1,2delta soluble complexes released by ectodomain shedding. N-glycosylated. Post-translationally, O-glycosylated in the mucin-like region. In terms of processing, palmitoylation of GP2 is not required for its function. Specific enzymatic cleavages in vivo yield mature proteins. The precursor is processed into GP1 and GP2 by host cell furin in the trans Golgi, and maybe by other host proteases, to yield the mature GP1 and GP2 proteins. The cleavage site corresponds to the furin optimal cleavage sequence [KR]-X-[KR]-R. This cleavage does not seem to be required for function. After the internalization of the virus into cell endosomes, GP1 C-terminus is removed by the endosomal proteases cathepsin B, cathepsin L, or both, leaving a 19-kDa N-terminal fragment which is further digested by cathepsin B. Proteolytic processing of GP1,2 by host ADAM17 can remove the transmembrane anchor of GP2 and leads to shedding of complexes consisting in GP1 and truncated GP2 (GP1,2delta).

The protein resides in the virion membrane. It localises to the host cell membrane. Its subcellular location is the secreted. Trimeric GP1,2 complexes form the virion surface spikes and mediate the viral entry processes, with GP1 acting as the receptor-binding subunit and GP2 as the membrane fusion subunit. At later times of infection, down-regulates the expression of various host cell surface molecules that are essential for immune surveillance and cell adhesion. Down-modulates several integrins including ITGA1, ITGA2, ITGA3, ITGA4, ITGA5, ITGA6, ITGAV and ITGB1. This decrease in cell adhesion molecules may lead to cell detachment, contributing to the disruption of blood vessel integrity and hemorrhages developed during infection (cytotoxicity). Interacts with host TLR4 and thereby stimulates the differentiation and activation of monocytes leading to bystander death of T-lymphocytes. Down-regulates as well the function of host natural killer cells. Counteracts the antiviral effect of host BST2/tetherin that restricts release of progeny virions from infected cells. However, cooperates with VP40 and host BST2 to activate canonical NF-kappa-B pathway in a manner dependent on neddylation. Functionally, functions as a decoy for anti-GP1,2 antibodies thereby contributing to viral immune evasion. Interacts and activates host macrophages and dendritic cells inducing up-regulation of cytokine transcription. This effect is mediated throught activation of host TLR4. Its function is as follows. Responsible for binding to the receptor(s) on target cells. Interacts with CD209/DC-SIGN and CLEC4M/DC-SIGNR which act as cofactors for virus entry into dendritic cells (DCs) and endothelial cells. Binding to the macrophage specific lectin CLEC10A also seems to enhance virus infectivity. Interaction with FOLR1/folate receptor alpha may be a cofactor for virus entry in some cell types, although results are contradictory. Members of the Tyro3 receptor tyrosine kinase family also seem to be cell entry factors in filovirus infection. Once attached, the virions are internalized through clathrin-dependent endocytosis and/or macropinocytosis. After internalization of the virus into the endosomes of the host cell, proteolysis of GP1 by two cysteine proteases, CTSB/cathepsin B and CTSL/cathepsin L removes the glycan cap and allows GP1 binding to the host entry receptor NPC1. NPC1-binding, Ca(2+) and acidic pH induce a conformational change of GP2, which unmasks its fusion peptide and permit membranes fusion. In terms of biological role, acts as a class I viral fusion protein. Under the current model, the protein has at least 3 conformational states: pre-fusion native state, pre-hairpin intermediate state, and post-fusion hairpin state. During viral and target cell membrane fusion, the coiled coil regions (heptad repeats) assume a trimer-of-hairpins structure, positioning the fusion peptide in close proximity to the C-terminal region of the ectodomain. The formation of this structure appears to drive apposition and subsequent fusion of viral and target cell membranes. Responsible for penetration of the virus into the cell cytoplasm by mediating the fusion of the membrane of the endocytosed virus particle with the endosomal membrane. Low pH in endosomes induces an irreversible conformational change in GP2, releasing the fusion hydrophobic peptide. This is Envelope glycoprotein (GP) from Sudan ebolavirus (strain Human/Uganda/Gulu/2000) (SEBOV).